Consider the following 215-residue polypeptide: Cytochrome b6 (215 aa).

The helical transmembrane segment at 32–52 (IFYCLGGITLTCFLVQVATGF) threads the bilayer. Position 35 (C35) interacts with heme c. Residues H86 and H100 each contribute to the heme b site. The next 3 membrane-spanning stretches (helical) occupy residues 90–110 (ASMM…TGGF), 116–136 (LTWV…VTGY), and 186–206 (LHTF…FPMI). Residues H187 and H202 each contribute to the heme b site.

It belongs to the cytochrome b family. PetB subfamily. As to quaternary structure, the 4 large subunits of the cytochrome b6-f complex are cytochrome b6, subunit IV (17 kDa polypeptide, PetD), cytochrome f and the Rieske protein, while the 4 small subunits are PetG, PetL, PetM and PetN. The complex functions as a dimer. Heme b is required as a cofactor. Heme c serves as cofactor.

It is found in the plastid. The protein resides in the chloroplast thylakoid membrane. Component of the cytochrome b6-f complex, which mediates electron transfer between photosystem II (PSII) and photosystem I (PSI), cyclic electron flow around PSI, and state transitions. This chain is Cytochrome b6, found in Lactuca sativa (Garden lettuce).